We begin with the raw amino-acid sequence, 89 residues long: Cell division topological specificity factor (89 aa).

Belongs to the MinE family.

Its function is as follows. Prevents the cell division inhibition by proteins MinC and MinD at internal division sites while permitting inhibition at polar sites. This ensures cell division at the proper site by restricting the formation of a division septum at the midpoint of the long axis of the cell. The polypeptide is Cell division topological specificity factor (Pectobacterium carotovorum subsp. carotovorum (strain PC1)).